The chain runs to 531 residues: MSDILSQDWRDRRTFAIISHPDAGKTTLTEKLLLFGGAIALAGAVKGRKAAHHATSDWMKMEQERGISVTSSVMQFPYHGKVINLLDTPGHEDFSEDTYRTLTAVDSALMVIDCAKGVEERTIKLMEVCRLRTTPIFTFVNKLDRDGREPMEILDEIERVLHIQCAPVTWPIGMGRSLKGIYHLARDTVYFYTTGKGGASINHGETVVGLDNPRLDTLLPDIIDDFREEIHFLREVGNPFDHEAYLRGELTPVYFGSAISNFGVEEMLTDFAQLAPPPRPHRTTEREVAPQEEKLTGFVFKIQANMDLKHRDRIAFMRVNSGTFRAGMKLWQVRLGREVKIPDALTFLAAEREHAQEAFAGDIIGIHNHGTIRIGDTFTEGESLQFTGIPDFAPELFRRVQLKDPLKMKALLKGLAQLCEEGATQFFKPLIGSDLILGAIGVLQFEVVQQRLETEYNVKCQFESVAVATARWIEAPNDKALKQFIDKNQANLAHDHYEQLVYIAPSRVNLQLTQERFPDIVFSQTRDHLAQ.

The region spanning 10–279 is the tr-type G domain; the sequence is RDRRTFAIIS…DFAQLAPPPR (270 aa). GTP-binding positions include 19-26, 87-91, and 141-144; these read SHPDAGKT, DTPGH, and NKLD.

It belongs to the TRAFAC class translation factor GTPase superfamily. Classic translation factor GTPase family. PrfC subfamily.

It localises to the cytoplasm. Increases the formation of ribosomal termination complexes and stimulates activities of RF-1 and RF-2. It binds guanine nucleotides but is not codon-specific. It may interact directly with the ribosome. The stimulation of RF-1 and RF-2 is significantly reduced by GTP and GDP, but not by GMP. This Dichelobacter nodosus (Bacteroides nodosus) protein is Peptide chain release factor 3 (prfC).